A 175-amino-acid chain; its full sequence is Peptide deformylase (175 aa).

The Fe cation site is built by Cys-99 and His-141. Glu-142 is an active-site residue. His-145 serves as a coordination point for Fe cation.

Belongs to the polypeptide deformylase family. The cofactor is Fe(2+).

It carries out the reaction N-terminal N-formyl-L-methionyl-[peptide] + H2O = N-terminal L-methionyl-[peptide] + formate. Its function is as follows. Removes the formyl group from the N-terminal Met of newly synthesized proteins. Requires at least a dipeptide for an efficient rate of reaction. N-terminal L-methionine is a prerequisite for activity but the enzyme has broad specificity at other positions. In Rickettsia typhi (strain ATCC VR-144 / Wilmington), this protein is Peptide deformylase.